Here is a 610-residue protein sequence, read N- to C-terminus: MIEVLLVTICLAAFPYQGSSIILESGNVNDYEVVYPRKVTALPKGAVQPKYEDAMQYEFKVNGEPVVLHLEKNKGLFSKDYSETHYSPDGREITTYPAVEDHCYYHGRIENDADSTASISACNGLKGHFKLQRETYFIEPLKLSNSEAHAVFKYENVEKEDEAPKMCGVTQNWKSYEPIKKASQLVVTAEQQKYNPFRYVELFIVVDQGMVTKNNGDLDKIKARMYELANIVNEILRYLYMHAALVGLEIWSNGDKITVKPDVDYTLNSFAEWRKTDLLTRKKHDNAQLLTAIDFNGPTIGYAYIGSMCHPKRSVAIVEDYSPINLVVAVIMAHEMGHNLGIHHDTDFCSCGDYPCIMGPTISNEPSKFFSNCSYIQCWDFIMKENPQCILNEPLGTDIVSPPVCGNELLEVGEECDCGTPENCQNECCDAATCKLKSGSQCGHGDCCEQCKFSKSGTECRASMSECDPAEHCTGQSSECPADVFHKNGQPCLDNYGYCYNGNCPIMYHQCYALFGADVYEAEDSCFKDNQKGNYYGYCRKENGKKIPCAPEDVKCGRLYCKDNSPGQNNPCKMFYSNDDEHKGMVLPGTKCADGKVCSNGHCVDVATAY.

A signal peptide spans 1-20 (MIEVLLVTICLAAFPYQGSS). Residues 21–191 (IILESGNVND…ASQLVVTAEQ (171 aa)) constitute a propeptide that is removed on maturation. Glutamine 192 carries the post-translational modification Pyrrolidone carboxylic acid. The Peptidase M12B domain occupies 198–394 (RYVELFIVVD…ENPQCILNEP (197 aa)). Residues glutamate 201 and aspartate 285 each coordinate Ca(2+). 3 cysteine pairs are disulfide-bonded: cysteine 309-cysteine 389, cysteine 349-cysteine 373, and cysteine 351-cysteine 356. Histidine 334 is a Zn(2+) binding site. The active site involves glutamate 335. Zn(2+) is bound by residues histidine 338 and histidine 344. N-linked (GlcNAc...) asparagine glycosylation is present at asparagine 372. Residues cysteine 389, asparagine 392, valine 404, asparagine 407, leucine 409, glutamate 411, glutamate 414, and aspartate 417 each contribute to the Ca(2+) site. Positions 402-488 (PPVCGNELLE…ECPADVFHKN (87 aa)) constitute a Disintegrin domain. 22 disulfide bridges follow: cysteine 405–cysteine 424, cysteine 405–cysteine 434, cysteine 416–cysteine 429, cysteine 416–cysteine 434, cysteine 418–cysteine 424, cysteine 428–cysteine 451, cysteine 442–cysteine 448, cysteine 447–cysteine 473, cysteine 460–cysteine 480, cysteine 467–cysteine 492, cysteine 467–cysteine 499, cysteine 492–cysteine 504, cysteine 499–cysteine 504, cysteine 511–cysteine 526, cysteine 511–cysteine 561, cysteine 526–cysteine 572, cysteine 539–cysteine 549, cysteine 549–cysteine 556, cysteine 556–cysteine 598, cysteine 561–cysteine 572, cysteine 592–cysteine 603, and cysteine 598–cysteine 603. The D/ECD-tripeptide motif lies at 466 to 468 (ECD). The Ca(2+) site is built by aspartate 468, proline 469, glutamate 471, aspartate 483, and valine 484.

Belongs to the venom metalloproteinase (M12B) family. P-III subfamily. P-IIIb sub-subfamily. Monomer. Requires Zn(2+) as cofactor. As to expression, expressed by the venom gland.

Its subcellular location is the secreted. The catalysed reaction is Cleavage of 5-His-|-Leu-6, 10-His-|-Leu-11, 14-Ala-|-Leu-15, 16-Tyr-|-Leu-17 and 24-Phe-|-Phe-25 in insulin B chain.. Inhibited by EDTA and EGTA. Its function is as follows. Has caseinolytic activity. Causes hemorrhage on rabbit skin and causes myonecrosis in mouse tibialis anterior muscle. Inhibits platelet aggregation. This is Zinc metalloproteinase-disintegrin-like bothropasin from Bothrops jararaca (Jararaca).